We begin with the raw amino-acid sequence, 86 residues long: Large ribosomal subunit protein bL31 (86 aa).

Positions 65–86 (YGMGSADSATSKETKESKKSDK) are disordered. The segment covering 74–86 (TSKETKESKKSDK) has biased composition (basic and acidic residues).

The protein belongs to the bacterial ribosomal protein bL31 family. Type A subfamily. As to quaternary structure, part of the 50S ribosomal subunit.

Its function is as follows. Binds the 23S rRNA. This chain is Large ribosomal subunit protein bL31, found in Prochlorococcus marinus subsp. pastoris (strain CCMP1986 / NIES-2087 / MED4).